The chain runs to 162 residues: Transcription elongation factor GreA (162 aa).

A coiled-coil region spans residues 1–28 (MQKEPMLEETYRKLSEELEQLKSVERGV).

Belongs to the GreA/GreB family.

In terms of biological role, necessary for efficient RNA polymerase transcription elongation past template-encoded arresting sites. The arresting sites in DNA have the property of trapping a certain fraction of elongating RNA polymerases that pass through, resulting in locked ternary complexes. Cleavage of the nascent transcript by cleavage factors such as GreA or GreB allows the resumption of elongation from the new 3'terminus. GreA releases sequences of 2 to 3 nucleotides. The protein is Transcription elongation factor GreA of Sulfurovum sp. (strain NBC37-1).